The sequence spans 979 residues: MSPLKIHGPIRIRSMQTGITKWKEGSFEIVEKENKVSLVVHYNTGGIPRIFQLSHNIKNVVLRPSGAKQSRLMLTLQDNSFLSIDKVPSKDAEEMRLFLDAVHQNRLPAAMKPSQGSGSFGAILGSRTSQKETSRQLSYSDNQASAKRGSLETKDDIPFRKVLGNPGRGSIKTVAGSGIARTIPSLTSTSTPLRSGLLENRTEKRKRMISTGSELNEDYPKENDSSSNNKAMTDPSRKYLTSSREKQLSLKQSEENRTSGLLPLQSSSFYGSRAGSKEHSSGGTNLDRTNVSSQTPSAKRSLGFLPQPVPLSVKKLRCNQDYTGWNKPRVPLSSHQQQQLQGFSNLGNTCYMNAILQSLFSLQSFANDLLKQGIPWKKIPLNALIRRFAHLLVKKDICNSETKKDLLKKVKNAISATAERFSGYMQNDAHEFLSQCLDQLKEDMEKLNKTWKTEPVSGEENSPDISATRAYTCPVITNLEFEVQHSIICKACGEIIPKREQFNDLSIDLPRRKKPLPPRSIQDSLDLFFRAEELEYSCEKCGGKCALVRHKFNRLPRVLILHLKRYSFNVALSLNNKIGQQVIIPRYLTLSSHCTENTKPPFTLGWSAHMAISRPLKASQMVNSCITSPSTPSKKFTFKSKSSLALCLDSDSEDELKRSVALSQRLCEMLGNEQQQEDLEKDSKLCPIEPDKSELENSGFDRMSEEELLAAVLEISKRDASPSLSHEDDDKPTSSPDTGFAEDDIQEMPENPDTMETEKPKTITELDPASFTEITKDCDENKENKTPEGSQGEVDWLQQYDMEREREEQELQQALAQSLQEQEAWEQKEDDDLKRATELSLQEFNNSFVDALGSDEDSGNEDVFDMEYTEAEAEELKRNAETGNLPHSYRLISVVSHIGSTSSSGHYISDVYDIKKQAWFTYNDLEVSKIQEAAVQSDRDRSGYIFFYMHKEIFDELLETEKNSQSLSTEVGKTTRQAL.

A KEN box 1 motif is present at residues 32–34 (KEN). 2 consecutive short sequence motifs (D-box) follow at residues 71-79 (RLMLTLQDN) and 96-105 (RLFLDAVHQN). A disordered region spans residues 110–153 (AMKPSQGSGSFGAILGSRTSQKETSRQLSYSDNQASAKRGSLET). Ser-114 is modified (phosphoserine). Residues 135 to 145 (RQLSYSDNQAS) show a composition bias toward polar residues. Residues 160–168 (RKVLGNPGR) carry the D-box 3 motif. Ser-170 is modified (phosphoserine). Over residues 183–198 (IPSLTSTSTPLRSGLL) the composition is skewed to low complexity. The interval 183 to 304 (IPSLTSTSTP…TPSAKRSLGF (122 aa)) is disordered. At Ser-210 the chain carries Phosphoserine. The KEN box 2 motif lies at 221 to 223 (KEN). Residues 243–257 (SREKQLSLKQSEENR) show a composition bias toward basic and acidic residues. Over residues 281–298 (SGGTNLDRTNVSSQTPSA) the composition is skewed to polar residues. Positions 341-951 (QGFSNLGNTC…SGYIFFYMHK (611 aa)) constitute a USP domain. The Nucleophile role is filled by Cys-350. Ser-628 carries the phosphoserine; by CDK2 modification. Phosphoserine occurs at positions 650 and 652. Disordered regions lie at residues 673–701 (EQQQ…SGFD) and 719–795 (DASP…GEVD). Composition is skewed to basic and acidic residues over residues 681-695 (KDSK…KSEL) and 719-732 (DASP…DDKP). One can recognise a UIM 1 domain in the interval 704–723 (SEEELLAAVLEISKRDASPS). Position 770 is a phosphoserine (Ser-770). Positions 774–786 (ITKDCDENKENKT) are enriched in basic and acidic residues. Residues 782-784 (KEN) carry the KEN box 3 motif. UIM domains follow at residues 806–825 (REEQ…QEAW) and 828–847 (KEDD…FNNS). His-906 functions as the Proton acceptor in the catalytic mechanism.

Belongs to the peptidase C19 family. As to quaternary structure, interacts with FZR1/CDH1. Interacts with CDT1. Post-translationally, polyubiquitinated via 'Lys-11'-linked ubiquitin by the APC(CDH1) complex during late mitosis, leading to its degradation. Able to mediate auto-deubiquitination. Phosphorylated at Ser-628 by CDK2 during G1/S phase but not during mitosis; phosphorylation at Ser-628 is required for deubiquitinase activity. Also polyubiquitinated during early G1 phase, without leading to degradation. Phosphorylated at Ser-114 by ATM following DNA damage, which in turn increases its deubiquitination activity towards BLM. In terms of tissue distribution, expressed in brain and prostate.

The protein resides in the nucleus. It is found in the chromosome. It carries out the reaction Thiol-dependent hydrolysis of ester, thioester, amide, peptide and isopeptide bonds formed by the C-terminal Gly of ubiquitin (a 76-residue protein attached to proteins as an intracellular targeting signal).. Deubiquitinase that plays a role in different processes including cell cycle regulation, DNA replication or DNA damage response. Antagonizes the anaphase-promoting complex (APC/C) during G1/S transition by mediating deubiquitination of cyclin-A (CCNA1 and CCNA2), thereby promoting S phase entry. Specifically mediates deubiquitination of 'Lys-11'-linked polyubiquitin chains, a specific ubiquitin-linkage type mediated by the APC/C complex. Phosphorylation at Ser-628 during G1/S phase maximizes the deubiquitinase activity, leading to prevent degradation of cyclin-A (CCNA1 and CCNA2). Plays an important role in the regulation of DNA replication by stabilizing the licensing factor CDT1. Also plays an essential role beyond S-phase entry to promote the efficiency and fidelity of replication by deubiquitinating checkpoint kinase 1/CHK1, promoting its stability. Sustains the DNA damage response (DDR) by deubiquitinating and stabilizing the ATP-dependent DNA helicase BLM. Mechanistically, DNA double-strand breaks (DSB) promotes ATM-mediated phosphorylation of USP37 and enhances the binding between USP37 and BLM. Promotes cell migration by deubiquitinating and stabilizing the epithelial-mesenchymal transition (EMT)-inducing transcription factor SNAI. Plays a role in the regulation of mitotic spindle assembly and mitotic progression by associating with chromatin-associated WAPL and stabilizing it through deubiquitination. The chain is Ubiquitin carboxyl-terminal hydrolase 37 (USP37) from Homo sapiens (Human).